A 546-amino-acid polypeptide reads, in one-letter code: Apolipoprotein N-acyltransferase 1 (546 aa).

A run of 7 helical transmembrane segments spans residues 14 to 34, 41 to 61, 62 to 82, 85 to 105, 122 to 142, 151 to 171, and 194 to 214; these read FLLF…PLLP, AYGA…FAVV, FWGG…LFVF, VALC…CLAL, LVWL…PYGV, LPLI…LVVF, and FLSA…LCGF. The 270-residue stretch at 233 to 502 folds into the CN hydrolase domain; sequence AKVALVQPNG…PGVLVADVPI (270 aa). Glu280 acts as the Proton acceptor in catalysis. Residue Lys361 is part of the active site. The active-site Nucleophile is Cys413. Residues 514–534 traverse the membrane as a helical segment; the sequence is GDALGVFFCVASLFILIAGGV.

It belongs to the CN hydrolase family. Apolipoprotein N-acyltransferase subfamily.

It is found in the cell inner membrane. The catalysed reaction is N-terminal S-1,2-diacyl-sn-glyceryl-L-cysteinyl-[lipoprotein] + a glycerophospholipid = N-acyl-S-1,2-diacyl-sn-glyceryl-L-cysteinyl-[lipoprotein] + a 2-acyl-sn-glycero-3-phospholipid + H(+). The protein operates within protein modification; lipoprotein biosynthesis (N-acyl transfer). Its function is as follows. Catalyzes the phospholipid dependent N-acylation of the N-terminal cysteine of apolipoprotein, the last step in lipoprotein maturation. The protein is Apolipoprotein N-acyltransferase 1 of Treponema pallidum (strain Nichols).